Consider the following 265-residue polypeptide: MKPTSQYPQAVPNPPKNSLSDDTLVISSEFIQRLAVLTRKLGYVFNDLSLAKLALTHRSFDSKKNYERLEFLGDALLGMIVGEALYHRYPTQNEGRLTRMRATLVRQESLVIIAQNLELSNQLILGVGERKGGGRNRASILADAVESLIGAIYLDSQDMNITRECVLSWYGDLIDNVNDQKALKDAKSRLQEWLQSKQFDLPHYELMETRGNAPHQLFVVRCQVNIINCPDITESGESRRIAEQKAAELMINQLHKLPGVPKKRR.

The 124-residue stretch at 34–157 (LAVLTRKLGY…LIGAIYLDSQ (124 aa)) folds into the RNase III domain. Position 70 (Glu70) interacts with Mg(2+). Asp74 is a catalytic residue. Positions 143 and 146 each coordinate Mg(2+). The active site involves Glu146. In terms of domain architecture, DRBM spans 185–256 (DAKSRLQEWL…AELMINQLHK (72 aa)).

This sequence belongs to the ribonuclease III family. As to quaternary structure, homodimer. The cofactor is Mg(2+).

It is found in the cytoplasm. The enzyme catalyses Endonucleolytic cleavage to 5'-phosphomonoester.. Its function is as follows. Digests double-stranded RNA. Involved in the processing of primary rRNA transcript to yield the immediate precursors to the large and small rRNAs (23S and 16S). Processes some mRNAs, and tRNAs when they are encoded in the rRNA operon. Processes pre-crRNA and tracrRNA of type II CRISPR loci if present in the organism. The protein is Ribonuclease 3 of Psychrobacter arcticus (strain DSM 17307 / VKM B-2377 / 273-4).